We begin with the raw amino-acid sequence, 200 residues long: dITP/XTP pyrophosphatase (200 aa).

Residue 7 to 12 (SNNRGK) coordinates substrate. D68 serves as the catalytic Proton acceptor. Residue D68 participates in Mg(2+) binding. Substrate contacts are provided by residues A69, 154–157 (FGFD), K177, and 182–183 (HR).

This sequence belongs to the HAM1 NTPase family. In terms of assembly, homodimer. It depends on Mg(2+) as a cofactor.

It carries out the reaction XTP + H2O = XMP + diphosphate + H(+). The catalysed reaction is dITP + H2O = dIMP + diphosphate + H(+). It catalyses the reaction ITP + H2O = IMP + diphosphate + H(+). In terms of biological role, pyrophosphatase that catalyzes the hydrolysis of nucleoside triphosphates to their monophosphate derivatives, with a high preference for the non-canonical purine nucleotides XTP (xanthosine triphosphate), dITP (deoxyinosine triphosphate) and ITP. Seems to function as a house-cleaning enzyme that removes non-canonical purine nucleotides from the nucleotide pool, thus preventing their incorporation into DNA/RNA and avoiding chromosomal lesions. The protein is dITP/XTP pyrophosphatase of Delftia acidovorans (strain DSM 14801 / SPH-1).